A 319-amino-acid chain; its full sequence is Acetyl-coenzyme A carboxylase carboxyl transferase subunit alpha (319 aa).

Residues Asp-35–Glu-296 enclose the CoA carboxyltransferase C-terminal domain.

It belongs to the AccA family. As to quaternary structure, acetyl-CoA carboxylase is a heterohexamer composed of biotin carboxyl carrier protein (AccB), biotin carboxylase (AccC) and two subunits each of ACCase subunit alpha (AccA) and ACCase subunit beta (AccD).

Its subcellular location is the cytoplasm. It carries out the reaction N(6)-carboxybiotinyl-L-lysyl-[protein] + acetyl-CoA = N(6)-biotinyl-L-lysyl-[protein] + malonyl-CoA. Its pathway is lipid metabolism; malonyl-CoA biosynthesis; malonyl-CoA from acetyl-CoA: step 1/1. In terms of biological role, component of the acetyl coenzyme A carboxylase (ACC) complex. First, biotin carboxylase catalyzes the carboxylation of biotin on its carrier protein (BCCP) and then the CO(2) group is transferred by the carboxyltransferase to acetyl-CoA to form malonyl-CoA. The protein is Acetyl-coenzyme A carboxylase carboxyl transferase subunit alpha of Aliivibrio fischeri (strain ATCC 700601 / ES114) (Vibrio fischeri).